Reading from the N-terminus, the 322-residue chain is Cytochrome c biogenesis protein CcsA (322 aa).

Transmembrane regions (helical) follow at residues 17–37 (VVSI…IVGL), 44–64 (GMIA…IYLG), 71–91 (LYES…VPYF), 98–118 (LSAL…SGLL), 143–163 (MVLG…LLVI), 225–245 (VISL…VWAN), 258–273 (ETWA…IYLH), and 286–306 (AIVA…VNLL).

Belongs to the CcmF/CycK/Ccl1/NrfE/CcsA family. May interact with Ccs1.

The protein localises to the plastid. The protein resides in the chloroplast thylakoid membrane. Its function is as follows. Required during biogenesis of c-type cytochromes (cytochrome c6 and cytochrome f) at the step of heme attachment. The chain is Cytochrome c biogenesis protein CcsA from Vitis vinifera (Grape).